The primary structure comprises 542 residues: Chaperonin GroEL (542 aa).

ATP contacts are provided by residues 29 to 32 (TLGP), 86 to 90 (DGTTT), Gly413, 476 to 478 (NAA), and Asp492.

It belongs to the chaperonin (HSP60) family. As to quaternary structure, forms a cylinder of 14 subunits composed of two heptameric rings stacked back-to-back. Interacts with the co-chaperonin GroES.

The protein localises to the cytoplasm. The catalysed reaction is ATP + H2O + a folded polypeptide = ADP + phosphate + an unfolded polypeptide.. Functionally, together with its co-chaperonin GroES, plays an essential role in assisting protein folding. The GroEL-GroES system forms a nano-cage that allows encapsulation of the non-native substrate proteins and provides a physical environment optimized to promote and accelerate protein folding. This is Chaperonin GroEL from Lactococcus lactis subsp. cremoris (strain SK11).